The primary structure comprises 432 residues: Adenylosuccinate synthetase (432 aa).

Residues G12–K18 and G40–T42 each bind GTP. The active-site Proton acceptor is the D13. Mg(2+) contacts are provided by D13 and G40. IMP contacts are provided by residues D13–K16, N38–H41, T130, R144, Q225, T240, and R304. The active-site Proton donor is the H41. S300–R306 is a binding site for substrate. Residues R306, K332–D334, and S414–G416 each bind GTP.

It belongs to the adenylosuccinate synthetase family. In terms of assembly, homodimer. Mg(2+) serves as cofactor.

The protein localises to the cytoplasm. It carries out the reaction IMP + L-aspartate + GTP = N(6)-(1,2-dicarboxyethyl)-AMP + GDP + phosphate + 2 H(+). It participates in purine metabolism; AMP biosynthesis via de novo pathway; AMP from IMP: step 1/2. Functionally, plays an important role in the de novo pathway of purine nucleotide biosynthesis. Catalyzes the first committed step in the biosynthesis of AMP from IMP. The chain is Adenylosuccinate synthetase from Geobacter sp. (strain M21).